We begin with the raw amino-acid sequence, 416 residues long: Serine protease inhibitor A3K (416 aa).

The signal sequence occupies residues 1–20; the sequence is MAFIAALGLLMAGICPAVLC. N-linked (GlcNAc...) asparagine glycosylation is found at Asn-102, Asn-182, Asn-220, and Asn-267. The segment at 365-392 is RCL; sequence GTEGAAATAVTAALKSLPQTIPLLNFNR.

It belongs to the serpin family. Post-translationally, N-glycosylated. As to expression, liver and plasma.

It is found in the secreted. Functionally, binds to and inhibits kallikreins. Inhibits trypsin but not chymotrypsin or elastase. The protein is Serine protease inhibitor A3K (Serpina3k) of Rattus norvegicus (Rat).